A 109-amino-acid chain; its full sequence is Small ribosomal subunit protein bS6 (109 aa).

It belongs to the bacterial ribosomal protein bS6 family.

Its function is as follows. Binds together with bS18 to 16S ribosomal RNA. This Dehalococcoides mccartyi (strain CBDB1) protein is Small ribosomal subunit protein bS6.